The chain runs to 606 residues: Probable potassium transport system protein Kup (606 aa).

The next 12 helical transmembrane spans lie at 18-38 (GLVFGDIGTSPIYTLTVVFAL), 46-66 (VFGILSLVFWTMTILVTAEYA), 97-117 (LTFVVFLTYLGVSLLMGDGVI), 138-158 (GLHQSWLILIAAIIAVGLFVF), 166-186 (VAGAFGPIMVVWFASLALSGA), 212-232 (GLAGFIVLSEVILCATGGEAL), 247-267 (AWYIVFWALYLNYLGQGAFII), 287-307 (LYIPFLILTILATIIASQAMI), 339-359 (IYIGSVNWMLMIAVVVIMLVF), 368-388 (AYGLAVTGSMSITGIMMILIL), 395-415 (WKAVFAALITVVDLVFFTACL), and 418-438 (LPHGGYWSIILASVPFITILV).

It belongs to the HAK/KUP transporter (TC 2.A.72) family.

It is found in the cell inner membrane. The catalysed reaction is K(+)(in) + H(+)(in) = K(+)(out) + H(+)(out). Transport of potassium into the cell. Likely operates as a K(+):H(+) symporter. In Trichlorobacter lovleyi (strain ATCC BAA-1151 / DSM 17278 / SZ) (Geobacter lovleyi), this protein is Probable potassium transport system protein Kup.